The chain runs to 37 residues: MKVRASVKKMCRNCKIVKREGVVRVLCSDPKHKQRQG.

It belongs to the bacterial ribosomal protein bL36 family.

This is Large ribosomal subunit protein bL36 from Histophilus somni (strain 129Pt) (Haemophilus somnus).